The primary structure comprises 65 residues: MPKMKTKKSASKRFTARPGGTIKRGQAFKRHILTKKTTKNKRHLRGTEGVHETNLKSVRAMMPYA.

A compositionally biased stretch (basic residues) spans 1–15; that stretch reads MPKMKTKKSASKRFT. Disordered regions lie at residues 1-26 and 38-65; these read MPKM…KRGQ and TKNK…MPYA. Positions 45–54 are enriched in basic and acidic residues; that stretch reads RGTEGVHETN.

Belongs to the bacterial ribosomal protein bL35 family.

This is Large ribosomal subunit protein bL35 from Ralstonia pickettii (strain 12J).